Consider the following 420-residue polypeptide: Signal recognition particle receptor FtsY (420 aa).

Over residues D28–K62 the composition is skewed to basic and acidic residues. The disordered stretch occupies residues D28 to R118. The span at A63 to P104 shows a compositional bias: low complexity. GTP is bound by residues G227 to T234, D310 to R314, and S372 to D375.

The protein belongs to the GTP-binding SRP family. FtsY subfamily. In terms of assembly, part of the signal recognition particle protein translocation system, which is composed of SRP and FtsY.

The protein localises to the cell membrane. Its subcellular location is the cytoplasm. It catalyses the reaction GTP + H2O = GDP + phosphate + H(+). Its function is as follows. Involved in targeting and insertion of nascent membrane proteins into the cytoplasmic membrane. Acts as a receptor for the complex formed by the signal recognition particle (SRP) and the ribosome-nascent chain (RNC). This is Signal recognition particle receptor FtsY from Bifidobacterium longum (strain NCC 2705).